Reading from the N-terminus, the 136-residue chain is MIRIGMVVAEFNYDITMMMLERARSYAEFLGVEVHKILRVPGSFDMPLAIKKLLMDNDIDGVVTIGAVIKGETDHHKIIMDNVSRKITDLSLEYNKPVALGISGPGESRLQAEARIDMAKEAVESCVKMIKLLKSN.

Residues Phe-11, 43–45, and 67–69 each bind 5-amino-6-(D-ribitylamino)uracil; these read SFD and AVI. 72–73 is a binding site for (2S)-2-hydroxy-3-oxobutyl phosphate; it reads ET. His-75 serves as the catalytic Proton donor. Leu-100 is a 5-amino-6-(D-ribitylamino)uracil binding site. Residue Arg-115 coordinates (2S)-2-hydroxy-3-oxobutyl phosphate.

Belongs to the DMRL synthase family.

The enzyme catalyses (2S)-2-hydroxy-3-oxobutyl phosphate + 5-amino-6-(D-ribitylamino)uracil = 6,7-dimethyl-8-(1-D-ribityl)lumazine + phosphate + 2 H2O + H(+). It participates in cofactor biosynthesis; riboflavin biosynthesis; riboflavin from 2-hydroxy-3-oxobutyl phosphate and 5-amino-6-(D-ribitylamino)uracil: step 1/2. Its function is as follows. Catalyzes the formation of 6,7-dimethyl-8-ribityllumazine by condensation of 5-amino-6-(D-ribitylamino)uracil with 3,4-dihydroxy-2-butanone 4-phosphate. This is the penultimate step in the biosynthesis of riboflavin. The protein is 6,7-dimethyl-8-ribityllumazine synthase of Picrophilus torridus (strain ATCC 700027 / DSM 9790 / JCM 10055 / NBRC 100828 / KAW 2/3).